The primary structure comprises 233 residues: Metallo-beta-lactamase domain-containing protein 1 (233 aa).

Zn(2+) contacts are provided by histidine 96, histidine 98, aspartate 100, histidine 101, histidine 152, aspartate 174, and histidine 213.

The protein belongs to the metallo-beta-lactamase superfamily. Glyoxalase II family. In terms of assembly, homodimer. Zn(2+) is required as a cofactor.

It is found in the cytoplasm. Its subcellular location is the cytosol. The protein localises to the nucleus. It catalyses the reaction a ribonucleotidyl-ribonucleotide-RNA + H2O = a 3'-end ribonucleotide-RNA + a 5'-end 5'-phospho-ribonucleoside-RNA + H(+). Functionally, endoribonuclease that catalyzes the hydrolysis of histone-coding pre-mRNA 3'-end. Involved in histone pre-mRNA processing during the S-phase of the cell cycle, which is required for entering/progressing through S-phase. Cleaves histone pre-mRNA at a major and a minor cleavage site after the 5'-ACCCA-3' and the 5'-ACCCACA-3' sequence, respectively, and located downstream of the stem-loop. May require the presence of the HDE element located at the histone pre-RNA 3'-end to avoid non-specific cleavage. In Xenopus laevis (African clawed frog), this protein is Metallo-beta-lactamase domain-containing protein 1 (mblac1).